A 248-amino-acid polypeptide reads, in one-letter code: Aliphatic sulfonates import ATP-binding protein SsuB 2 (248 aa).

In terms of domain architecture, ABC transporter spans Val-14 to Ile-230. Gly-46–Ser-53 contacts ATP.

It belongs to the ABC transporter superfamily. Aliphatic sulfonates importer (TC 3.A.1.17.2) family. In terms of assembly, the complex is composed of two ATP-binding proteins (SsuB), two transmembrane proteins (SsuC) and a solute-binding protein (SsuA).

It localises to the cell inner membrane. The catalysed reaction is ATP + H2O + aliphatic sulfonate-[sulfonate-binding protein]Side 1 = ADP + phosphate + aliphatic sulfonateSide 2 + [sulfonate-binding protein]Side 1.. Functionally, part of the ABC transporter complex SsuABC involved in aliphatic sulfonates import. Responsible for energy coupling to the transport system. The protein is Aliphatic sulfonates import ATP-binding protein SsuB 2 of Mesorhizobium japonicum (strain LMG 29417 / CECT 9101 / MAFF 303099) (Mesorhizobium loti (strain MAFF 303099)).